A 327-amino-acid polypeptide reads, in one-letter code: Endochitinase CH5B (327 aa).

Positions 1–26 (MKKNRMMIMICSVGVVWMLLVGGSYG) are cleaved as a signal peptide. One can recognise a Chitin-binding type-1 domain in the interval 27-67 (EQCGRQAGGALCPGGNCCSQFGWCGSTTDYCGKDCQSQCGG). 7 disulfides stabilise this stretch: Cys29-Cys44, Cys38-Cys50, Cys43-Cys57, Cys61-Cys65, Cys96-Cys158, Cys169-Cys177, and Cys276-Cys308. The Proton donor role is filled by Glu140. The propeptide at 317–327 (SLFLSDLVTSQ) is removed in mature form.

Belongs to the glycosyl hydrolase 19 family. Chitinase class I subfamily.

The protein localises to the vacuole. It carries out the reaction Random endo-hydrolysis of N-acetyl-beta-D-glucosaminide (1-&gt;4)-beta-linkages in chitin and chitodextrins.. Functionally, defense against chitin-containing fungal pathogens. The chain is Endochitinase CH5B from Phaseolus vulgaris (Kidney bean).